The primary structure comprises 620 residues: MFGRDPWGGPLEISNADSATDDDRSRDLDRGALMRQLDETQQSWLLAGPGDQAGKKKKKYVDLGCMVLDRKIFMWTVGTILGVGLFIGFVMMIVKLVPHKRPPPPPPDQYTQALHKALMFFNAQRSGPLPKHNGVSWRGNSCMKDGLSDSTVRKSLVGGFYDAGDAIKFNYPMAWSMTMLSWSVIEYKAKYEAIGELDHVKELIKWGTDYLLKTFNSSADTIDRIVAQVGVGDTSKGGAQPNDHYCWMRPEDIDYPRPVTECHSCSDLASEMAAALAAASIVFKDSKTYSDKLVRGAKALYKFGRLQRGRYSPNGSDQAIFYNSTSYWDEFVWGGAWMYFATGNNTYLSVATAPGMAKHAGAYWLDSPNYGVFTWDDKLPGAQVLLSRLRLFLSPGYPYEEILRTFHNQTDNVMCSYLPMYNSFNFTKGGMIQLNHGRPQPLQYVVNAAFLASLYSDYLDAADTPGWYCGPTFYTTEVLRKFARSQLDYVLGKNPLKMSYVVGFGNKYPKRAHHRGASIPHNGVKYGCKGGFKWRETKKPNPNILIGALVAGPDRHDGFKDVRTNYNYTEPTLAANAGLVAALISLTNIHVKSGIDKNTIFSAVPPMFPTPPPPPSAWKP.

Residues 1–26 (MFGRDPWGGPLEISNADSATDDDRSR) are disordered. The chain crosses the membrane as a helical; Signal-anchor for type II membrane protein span at residues 72 to 92 (IFMWTVGTILGVGLFIGFVMM). D165 functions as the Nucleophile in the catalytic mechanism. N-linked (GlcNAc...) asparagine glycosylation is found at N216, N314, N323, N344, N408, and N425. Catalysis depends on residues H513 and D561. N567 is a glycosylation site (N-linked (GlcNAc...) asparagine). E570 is an active-site residue.

It belongs to the glycosyl hydrolase 9 (cellulase E) family. As to expression, ubiquitous.

The protein resides in the membrane. The catalysed reaction is Endohydrolysis of (1-&gt;4)-beta-D-glucosidic linkages in cellulose, lichenin and cereal beta-D-glucans.. In Oryza sativa subsp. japonica (Rice), this protein is Endoglucanase 10 (GLU2).